Reading from the N-terminus, the 301-residue chain is Polyamine aminopropyltransferase (301 aa).

The PABS domain maps to 4-240 (WHWLLEWQTP…GLWGFVYGGV (237 aa)). Gln33 is an S-methyl-5'-thioadenosine binding site. 2 residues coordinate spermidine: His64 and Glu89. S-methyl-5'-thioadenosine contacts are provided by residues Asp109 and 141–142 (DG). Asp159 functions as the Proton acceptor in the catalytic mechanism.

The protein belongs to the spermidine/spermine synthase family. Homodimer or homotetramer.

The protein resides in the cytoplasm. It catalyses the reaction S-adenosyl 3-(methylsulfanyl)propylamine + putrescine = S-methyl-5'-thioadenosine + spermidine + H(+). The protein operates within amine and polyamine biosynthesis; spermidine biosynthesis; spermidine from putrescine: step 1/1. Functionally, catalyzes the irreversible transfer of a propylamine group from the amino donor S-adenosylmethioninamine (decarboxy-AdoMet) to putrescine (1,4-diaminobutane) to yield spermidine. The polypeptide is Polyamine aminopropyltransferase (Saccharolobus islandicus (strain Y.N.15.51 / Yellowstone #2) (Sulfolobus islandicus)).